Here is a 126-residue protein sequence, read N- to C-terminus: Fluoride-specific ion channel FluC 3 (126 aa).

4 helical membrane-spanning segments follow: residues 7 to 27, 37 to 57, 68 to 87, and 101 to 121; these read MWVG…GLSI, LGTF…SILF, LMNT…FSSM, and AIAA…AAFG. Positions 79 and 82 each coordinate Na(+).

Belongs to the fluoride channel Fluc/FEX (TC 1.A.43) family.

The protein resides in the cell inner membrane. The catalysed reaction is fluoride(in) = fluoride(out). Na(+) is not transported, but it plays an essential structural role and its presence is essential for fluoride channel function. Fluoride-specific ion channel. Important for reducing fluoride concentration in the cell, thus reducing its toxicity. This is Fluoride-specific ion channel FluC 3 from Yersinia pestis.